Here is a 192-residue protein sequence, read N- to C-terminus: Erythropoietin (192 aa).

Positions 1–26 are cleaved as a signal peptide; sequence MGVPERPTLLLLLSLLLIPLGLPVLC. Residues Cys-33 and Cys-187 are joined by a disulfide bond. Asn-50, Asn-64, and Asn-109 each carry an N-linked (GlcNAc...) asparagine glycan.

This sequence belongs to the EPO/TPO family. In terms of tissue distribution, produced by kidney or liver of adult mammals and by liver of fetal or neonatal mammals.

Its subcellular location is the secreted. In terms of biological role, hormone involved in the regulation of erythrocyte proliferation and differentiation and the maintenance of a physiological level of circulating erythrocyte mass. Binds to EPOR leading to EPOR dimerization and JAK2 activation thereby activating specific downstream effectors, including STAT1 and STAT3. The polypeptide is Erythropoietin (Epo) (Mus musculus (Mouse)).